The following is a 21-amino-acid chain: Dahlein-5.2 (21 aa).

Expressed by the skin dorsal glands.

Its subcellular location is the secreted. Has no antimicrobial activity. Strongly inhibits the formation of NO by neuronal nitric oxide synthase at micromolar concentrations. The protein is Dahlein-5.2 of Ranoidea dahlii (Dahl's aquatic frog).